Here is a 419-residue protein sequence, read N- to C-terminus: L-rhamnose isomerase (419 aa).

3 residues coordinate Mn(2+): His-262, Asp-294, and Asp-296.

The protein belongs to the rhamnose isomerase family. As to quaternary structure, homotetramer. The cofactor is Mn(2+).

The protein resides in the cytoplasm. It catalyses the reaction L-rhamnopyranose = L-rhamnulose. Its pathway is carbohydrate degradation; L-rhamnose degradation; glycerone phosphate from L-rhamnose: step 1/3. Functionally, catalyzes the interconversion of L-rhamnose and L-rhamnulose. In Klebsiella pneumoniae (strain 342), this protein is L-rhamnose isomerase.